A 291-amino-acid chain; its full sequence is uncharacterized protein (291 aa).

This is an uncharacterized protein from Lymantria dispar multicapsid nuclear polyhedrosis virus (LdMNPV).